A 372-amino-acid polypeptide reads, in one-letter code: tRNA-specific 2-thiouridylase MnmA (372 aa).

ATP is bound by residues 16–23 (GMSGGVDS) and M42. Residues 102 to 104 (NPD) form an interaction with target base in tRNA region. The active-site Nucleophile is C107. C107 and C205 are disulfide-bonded. G132 contacts ATP. Residues 155-157 (KDQ) form an interaction with tRNA region. The Cysteine persulfide intermediate role is filled by C205. Residues 317–318 (RY) are interaction with tRNA.

The protein belongs to the MnmA/TRMU family.

It localises to the cytoplasm. The catalysed reaction is S-sulfanyl-L-cysteinyl-[protein] + uridine(34) in tRNA + AH2 + ATP = 2-thiouridine(34) in tRNA + L-cysteinyl-[protein] + A + AMP + diphosphate + H(+). Functionally, catalyzes the 2-thiolation of uridine at the wobble position (U34) of tRNA, leading to the formation of s(2)U34. The protein is tRNA-specific 2-thiouridylase MnmA of Shewanella sp. (strain MR-4).